Reading from the N-terminus, the 181-residue chain is Nucleoside-triphosphatase THEP1 (181 aa).

ATP is bound by residues 12-19 (GPVGSIKS) and 104-111 (VIVIDEIG).

The protein belongs to the THEP1 NTPase family.

It catalyses the reaction a ribonucleoside 5'-triphosphate + H2O = a ribonucleoside 5'-diphosphate + phosphate + H(+). Has nucleotide phosphatase activity towards ATP, GTP, CTP, TTP and UTP. May hydrolyze nucleoside diphosphates with lower efficiency. The polypeptide is Nucleoside-triphosphatase THEP1 (Thermoplasma acidophilum (strain ATCC 25905 / DSM 1728 / JCM 9062 / NBRC 15155 / AMRC-C165)).